A 271-amino-acid polypeptide reads, in one-letter code: 4,5-DOPA dioxygenase extradiol (271 aa).

The Zn(2+) site is built by His-22, His-57, His-177, and His-234.

The protein belongs to the DODA-type extradiol aromatic ring-opening dioxygenase family. As to quaternary structure, monomer. Zn(2+) is required as a cofactor.

The protein localises to the cytoplasm. The enzyme catalyses L-dopa + O2 = 4-(L-alanin-3-yl)-2-hydroxy-cis,cis-muconate 6-semialdehyde + H(+). In vitro, opens the cyclic ring of dihydroxy-phenylalanine (DOPA) between carbons 4 and 5, thus producing an unstable seco-DOPA that rearranges nonenzymatically to betalamic acid. The physiological substrate is unknown. In Escherichia coli (strain K12), this protein is 4,5-DOPA dioxygenase extradiol (ygiD).